We begin with the raw amino-acid sequence, 254 residues long: GPI alpha-1,4-mannosyltransferase I, stabilizing subunit (254 aa).

An N-terminal signal peptide occupies residues 1–22 (MAAGAVAWLLLWAAWLVGRLAA). Topologically, residues 23–226 (DFSDAPFSAG…PVGLTIHTSL (204 aa)) are lumenal. Asparagine 211 carries N-linked (GlcNAc...) asparagine glycosylation. Residues 227 to 247 (VCSVTLLITILCSTLILLAVF) traverse the membrane as a helical segment. The Cytoplasmic portion of the chain corresponds to 248–254 (KYGHFSL).

The protein belongs to the PIGX family. As to quaternary structure, part of the glycosylphosphatidylinositol-mannosyltransferase I complex that is composed of PIGM and PIGX. Interacts with PIGM; PIGX stabilizes PIGM.

The protein resides in the endoplasmic reticulum membrane. Its pathway is glycolipid biosynthesis; glycosylphosphatidylinositol-anchor biosynthesis. In terms of biological role, stabilizing subunit of the glycosylphosphatidylinositol-mannosyltransferase I complex which catalyzes the transfer of the first mannose, via an alpha-1,4 bond from a dolichol-phosphate-mannose (Dol-P-Man) to the glucosaminyl acyl phosphatidylinositol (GlcN-(acyl)PI) intermediate to generate alpha-D-Man-(1-&gt;4)-alpha-D-GlcN-(1-&gt;6)-(1-radyl,2-acyl-sn-glycero-3-phospho)-2-acyl-inositol and participates in the sixth step of the glycosylphosphatidylinositol-anchor biosynthesis. Probably acts by stabilizing the mannosyltransferase PIGM. This Mus musculus (Mouse) protein is GPI alpha-1,4-mannosyltransferase I, stabilizing subunit.